Here is a 348-residue protein sequence, read N- to C-terminus: Erlin-1 (348 aa).

At 1–7 (MNMTQAR) the chain is on the cytoplasmic side. Residues 8-28 (VLVAAVVGLVAVLLYASIHKI) traverse the membrane as a helical segment. Residues 29–348 (EEGHLAVYYR…NLIQNKESTG (320 aa)) lie on the Lumenal side of the membrane. N-linked (GlcNAc...) asparagine glycosylation is present at asparagine 108. Lysine 269 bears the N6-acetyllysine mark. A compositionally biased stretch (basic and acidic residues) spans 321–333 (TGRESSHPSKEAL). The segment at 321–348 (TGRESSHPSKEALEPSGENLIQNKESTG) is disordered. Residues 339-348 (NLIQNKESTG) are compositionally biased toward polar residues.

This sequence belongs to the band 7/mec-2 family. As to quaternary structure, forms a heteromeric complex with ERLIN2. In complex with ERLIN2, interacts with RNF170. Interacts with AMFR and SYVN1. In terms of processing, deubiquitinated by USP25; leading to stabilization.

It localises to the endoplasmic reticulum membrane. Functionally, component of the ERLIN1/ERLIN2 complex which mediates the endoplasmic reticulum-associated degradation (ERAD) of inositol 1,4,5-trisphosphate receptors (IP3Rs). Involved in regulation of cellular cholesterol homeostasis by regulation the SREBP signaling pathway. Binds cholesterol and may promote ER retention of the SCAP-SREBF complex. The polypeptide is Erlin-1 (Pongo abelii (Sumatran orangutan)).